A 382-amino-acid polypeptide reads, in one-letter code: UDP-N-acetylglucosamine--N-acetylmuramyl-(pentapeptide) pyrophosphoryl-undecaprenol N-acetylglucosamine transferase (382 aa).

UDP-N-acetyl-alpha-D-glucosamine-binding positions include T11 to G13, N124, R164, S192, and Q314.

It belongs to the glycosyltransferase 28 family. MurG subfamily.

The protein localises to the cell membrane. The catalysed reaction is di-trans,octa-cis-undecaprenyl diphospho-N-acetyl-alpha-D-muramoyl-L-alanyl-D-glutamyl-meso-2,6-diaminopimeloyl-D-alanyl-D-alanine + UDP-N-acetyl-alpha-D-glucosamine = di-trans,octa-cis-undecaprenyl diphospho-[N-acetyl-alpha-D-glucosaminyl-(1-&gt;4)]-N-acetyl-alpha-D-muramoyl-L-alanyl-D-glutamyl-meso-2,6-diaminopimeloyl-D-alanyl-D-alanine + UDP + H(+). It functions in the pathway cell wall biogenesis; peptidoglycan biosynthesis. Its function is as follows. Cell wall formation. Catalyzes the transfer of a GlcNAc subunit on undecaprenyl-pyrophosphoryl-MurNAc-pentapeptide (lipid intermediate I) to form undecaprenyl-pyrophosphoryl-MurNAc-(pentapeptide)GlcNAc (lipid intermediate II). This chain is UDP-N-acetylglucosamine--N-acetylmuramyl-(pentapeptide) pyrophosphoryl-undecaprenol N-acetylglucosamine transferase, found in Deinococcus deserti (strain DSM 17065 / CIP 109153 / LMG 22923 / VCD115).